Consider the following 83-residue polypeptide: Conotoxin Pu6.1 (83 aa).

The first 19 residues, 1 to 19 (MKLVLAIVLILMLVSLSTG), serve as a signal peptide directing secretion. Residues 20–42 (AEESGQEISMVGPPLYIWDPIPP) constitute a propeptide that is removed on maturation. Intrachain disulfides connect Cys-43-Cys-57, Cys-50-Cys-62, and Cys-56-Cys-78.

Belongs to the conotoxin I3 superfamily. Expressed by the venom duct.

Its subcellular location is the secreted. The polypeptide is Conotoxin Pu6.1 (Conus pulicarius (Flea-bitten cone)).